The chain runs to 299 residues: Nucleotide-binding protein AFE_3021 (299 aa).

11–18 serves as a coordination point for ATP; it reads GLSGSGKS. Residue 62 to 65 participates in GTP binding; sequence DVRN.

This sequence belongs to the RapZ-like family.

In terms of biological role, displays ATPase and GTPase activities. This chain is Nucleotide-binding protein AFE_3021, found in Acidithiobacillus ferrooxidans (strain ATCC 23270 / DSM 14882 / CIP 104768 / NCIMB 8455) (Ferrobacillus ferrooxidans (strain ATCC 23270)).